The primary structure comprises 299 residues: 33 kDa chaperonin (299 aa).

2 disulfides stabilise this stretch: Cys240–Cys242 and Cys273–Cys276.

Belongs to the HSP33 family. In terms of processing, under oxidizing conditions two disulfide bonds are formed involving the reactive cysteines. Under reducing conditions zinc is bound to the reactive cysteines and the protein is inactive.

Its subcellular location is the cytoplasm. In terms of biological role, redox regulated molecular chaperone. Protects both thermally unfolding and oxidatively damaged proteins from irreversible aggregation. Plays an important role in the bacterial defense system toward oxidative stress. The protein is 33 kDa chaperonin of Thermosynechococcus vestitus (strain NIES-2133 / IAM M-273 / BP-1).